The following is a 328-amino-acid chain: NAD(P)H-dependent pentose reductase (328 aa).

The active-site Proton donor is Y50. Residue H112 coordinates substrate. NAD(+) contacts are provided by residues 174-175 (AN), 223-232 (SSFGPQSFVE), and 279-289 (KSNNVDRLKQN).

This sequence belongs to the aldo/keto reductase family.

Functionally, pentose reductase with a broad substrate affinity involved in pentose catabolism. Has highest reductase activities with L-arabinose and D-xylose as substrates, and displays much lower activities with D-ribose, D-galactose and D-glucose. Has highest dehydrogenase activity with L-arabitol as substrate, followed by xylitol and D-sorbitol. May be responsible for the first step of the L-arabinose catabolic pathway. This Pyricularia oryzae (strain 70-15 / ATCC MYA-4617 / FGSC 8958) (Rice blast fungus) protein is NAD(P)H-dependent pentose reductase (PRD1).